Here is a 333-residue protein sequence, read N- to C-terminus: 2-oxoglutarate-dependent dioxygenase ucsF (333 aa).

Positions 174 to 296 constitute a Fe2OG dioxygenase domain; that stretch reads NASELRLNHY…RYSIAYLCKA (123 aa). Fe cation-binding residues include H202, D204, and H264. R287 serves as a coordination point for 2-oxoglutarate.

It belongs to the iron/ascorbate-dependent oxidoreductase family. Requires Fe(2+) as cofactor.

It participates in mycotoxin biosynthesis. In terms of biological role, 2-oxoglutarate-dependent dioxygenase; part of the gene cluster that mediates the biosynthesis of UCS1025A, a member of the pyrrolizidinone family that acts as a strong telomerase inhibitor and displays potent antibacterial and antitumor properties. These compounds share a hemiaminal-containing pyrrolizidinone core fused with a gamma-lactone, giving a furopyrrolizidine that is connected to a decalin fragment. The polyketide synthase module (PKS) of the PKS-NRPS ucsA is responsible for the synthesis of the polyketide backbone via the condensation of an acetyl-CoA starter unit with 6 malonyl-CoA units. The downstream nonribosomal peptide synthetase (NRPS) module then amidates the carboxyl end of the polyketide with a 2S,3S-methylproline derived from L-isoleucine by the 2-oxoglutarate-dependent dioxygenase ucsF which converts L-isoleucine to (4S,5S)-4-methylpyrroline-5-carboxylate that is further converted to 2S,3S-methylproline by the pyrroline-5-carboxylate reductase ucsG. Reductive release of the completed aminoacyl polyketide from the assembly line can form the 3-pyrrolin-2-one structure via an intramolecular Knoevenagel reaction. Because ucsA lacks a designated enoylreductase (ER) domain, the required activity is provided the enoyl reductase ucsL. This keto acyclic precursor is the substrate of the Diels-Alderase ucsH, that catalyzes the Diels-Alder cycloaddition. Oxidation of the 3S-methyl group to a carboxylate by the cytochrome P450 monooxygenase ucsK allows an oxa-Michael cyclization that might involve the reductase/dehydrogenase ucsI and which furnishes the furopyrrolizidine. The oxidase ucsJ likely plays a critical role in stereoselective reduction of the C5-C6 double bond to afford the required R-configured carboxylate group. Further enolization and oxidation at C5 by an unidentified enzyme affords the last intermediate that can undergo oxa-Michael cyclization to yield UCS1025A. This chain is 2-oxoglutarate-dependent dioxygenase ucsF, found in Acremonium sp.